The following is a 154-amino-acid chain: Flagellar assembly factor FliW (154 aa).

The protein belongs to the FliW family. Interacts with translational regulator CsrA and flagellin(s).

It is found in the cytoplasm. Its function is as follows. Acts as an anti-CsrA protein, binds CsrA and prevents it from repressing translation of its target genes, one of which is flagellin. Binds to flagellin and participates in the assembly of the flagellum. This is Flagellar assembly factor FliW from Carboxydothermus hydrogenoformans (strain ATCC BAA-161 / DSM 6008 / Z-2901).